Here is a 585-residue protein sequence, read N- to C-terminus: Glutamate decarboxylase 2 (585 aa).

Over residues 1 to 14 the composition is skewed to low complexity; it reads MASPGSGFWSFGSE. The disordered stretch occupies residues 1–24; sequence MASPGSGFWSFGSEDGSGDSENPG. Serine 3, serine 6, serine 10, and serine 13 each carry phosphoserine. Residues cysteine 30 and cysteine 45 are each lipidated (S-palmitoyl cysteine). Substrate is bound at residue 181-183; that stretch reads QLS. Lysine 396 carries the N6-(pyridoxal phosphate)lysine modification. Residue arginine 558 participates in substrate binding.

Belongs to the group II decarboxylase family. In terms of assembly, homodimer. It depends on pyridoxal 5'-phosphate as a cofactor. Post-translationally, phosphorylated; which does not affect kinetic parameters or subcellular location. Palmitoylated; which is required for presynaptic clustering.

The protein resides in the cytoplasm. It localises to the cytosol. It is found in the cytoplasmic vesicle. The protein localises to the presynaptic cell membrane. Its subcellular location is the golgi apparatus membrane. The catalysed reaction is L-glutamate + H(+) = 4-aminobutanoate + CO2. Catalyzes the production of GABA. The polypeptide is Glutamate decarboxylase 2 (Homo sapiens (Human)).